The chain runs to 404 residues: UPF0674 endoplasmic reticulum membrane protein YNR021W (404 aa).

Ser-2 carries the post-translational modification N-acetylserine. An N-linked (GlcNAc...) asparagine glycan is attached at Asn-44. A helical membrane pass occupies residues 49–68; it reads LCALGVLFLVYAFYKFGNSV. N-linked (GlcNAc...) asparagine glycosylation is present at Asn-98. Residues 369 to 404 are disordered; sequence AKRRQLKASGQQEKVDQKMKEKRERRLKNKQRTRFQ. Over residues 381-392 the composition is skewed to basic and acidic residues; the sequence is EKVDQKMKEKRE. The span at 393-404 shows a compositional bias: basic residues; the sequence is RRLKNKQRTRFQ.

The protein belongs to the UPF0674 family.

The protein resides in the endoplasmic reticulum membrane. The polypeptide is UPF0674 endoplasmic reticulum membrane protein YNR021W (Saccharomyces cerevisiae (strain ATCC 204508 / S288c) (Baker's yeast)).